Consider the following 478-residue polypeptide: NADH-quinone oxidoreductase subunit N (478 aa).

Transmembrane regions (helical) follow at residues 8–28 (LVLP…FGVW), 38–58 (ILWA…LGTG), 62–82 (AFGG…VILV), 106–126 (PILI…GDLM), 160–180 (FVLG…VYGF), 200–220 (IGLL…VSAV), 234–254 (PTPV…ALIA), 268–288 (WGQI…IAGI), 300–320 (SSIS…AAGV), 322–342 (SMLL…AFIL), 368–388 (AFAL…LGFF), 398–418 (IGAG…IGAF), and 445–465 (FAFL…MAGV).

Belongs to the complex I subunit 2 family. In terms of assembly, NDH-1 is composed of 14 different subunits. Subunits NuoA, H, J, K, L, M, N constitute the membrane sector of the complex.

Its subcellular location is the cellular chromatophore membrane. It carries out the reaction a quinone + NADH + 5 H(+)(in) = a quinol + NAD(+) + 4 H(+)(out). In terms of biological role, NDH-1 shuttles electrons from NADH, via FMN and iron-sulfur (Fe-S) centers, to quinones in the respiratory chain. The immediate electron acceptor for the enzyme in this species is believed to be ubiquinone. Couples the redox reaction to proton translocation (for every two electrons transferred, four hydrogen ions are translocated across the cytoplasmic membrane), and thus conserves the redox energy in a proton gradient. The polypeptide is NADH-quinone oxidoreductase subunit N (Rhodobacter capsulatus (Rhodopseudomonas capsulata)).